The chain runs to 189 residues: Peptidyl-tRNA hydrolase (189 aa).

TRNA is bound at residue tyrosine 15. Catalysis depends on histidine 20, which acts as the Proton acceptor. TRNA is bound by residues phenylalanine 66, asparagine 68, and asparagine 114.

The protein belongs to the PTH family. In terms of assembly, monomer.

Its subcellular location is the cytoplasm. It catalyses the reaction an N-acyl-L-alpha-aminoacyl-tRNA + H2O = an N-acyl-L-amino acid + a tRNA + H(+). In terms of biological role, hydrolyzes ribosome-free peptidyl-tRNAs (with 1 or more amino acids incorporated), which drop off the ribosome during protein synthesis, or as a result of ribosome stalling. Functionally, catalyzes the release of premature peptidyl moieties from peptidyl-tRNA molecules trapped in stalled 50S ribosomal subunits, and thus maintains levels of free tRNAs and 50S ribosomes. The chain is Peptidyl-tRNA hydrolase from Streptococcus sanguinis (strain SK36).